A 223-amino-acid chain; its full sequence is Agamous-like MADS-box protein AGL11 (223 aa).

The 61-residue stretch at 1-61 (MGRGKIEIKR…GRVYEYSNNN (61 aa)) folds into the MADS-box domain. The K-box domain occupies 87 to 177 (AQYYQQESAK…RTKIAEVERL (91 aa)).

In terms of tissue distribution, expressed in flowers and seeds. Expressed in endotesta cell layer of developing seeds.

Its subcellular location is the nucleus. Functionally, probable transcription factor involved in seed development. Plays a role in seed morphogenesis by promoting the correct development of endotesta cell layer, which directs the further development of the seed coat, the endosperm, and consequently the embryo. The chain is Agamous-like MADS-box protein AGL11 from Vitis vinifera (Grape).